We begin with the raw amino-acid sequence, 65 residues long: Large ribosomal subunit protein bL35 (65 aa).

It belongs to the bacterial ribosomal protein bL35 family.

In Nostoc sp. (strain PCC 7120 / SAG 25.82 / UTEX 2576), this protein is Large ribosomal subunit protein bL35.